The chain runs to 690 residues: Elongation factor G (690 aa).

The tr-type G domain maps to 8–283 (EYIRNIGICA…AVVGFLPSPI (276 aa)). Residues 17 to 24 (AHIDAGKT), 81 to 85 (DTPGH), and 135 to 138 (NKMD) contribute to the GTP site.

It belongs to the TRAFAC class translation factor GTPase superfamily. Classic translation factor GTPase family. EF-G/EF-2 subfamily.

The protein resides in the cytoplasm. Catalyzes the GTP-dependent ribosomal translocation step during translation elongation. During this step, the ribosome changes from the pre-translocational (PRE) to the post-translocational (POST) state as the newly formed A-site-bound peptidyl-tRNA and P-site-bound deacylated tRNA move to the P and E sites, respectively. Catalyzes the coordinated movement of the two tRNA molecules, the mRNA and conformational changes in the ribosome. The sequence is that of Elongation factor G from Rickettsia canadensis (strain McKiel).